We begin with the raw amino-acid sequence, 383 residues long: 8-amino-7-oxononanoate synthase (383 aa).

Residue arginine 21 coordinates substrate. Pyridoxal 5'-phosphate is bound at residue 108–109 (GY). Histidine 133 contacts substrate. Pyridoxal 5'-phosphate contacts are provided by serine 179, histidine 207, and threonine 233. N6-(pyridoxal phosphate)lysine is present on lysine 236. Threonine 350 contacts substrate.

This sequence belongs to the class-II pyridoxal-phosphate-dependent aminotransferase family. BioF subfamily. As to quaternary structure, homodimer. The cofactor is pyridoxal 5'-phosphate.

The enzyme catalyses 6-carboxyhexanoyl-[ACP] + L-alanine + H(+) = (8S)-8-amino-7-oxononanoate + holo-[ACP] + CO2. Its pathway is cofactor biosynthesis; biotin biosynthesis. In terms of biological role, catalyzes the decarboxylative condensation of pimeloyl-[acyl-carrier protein] and L-alanine to produce 8-amino-7-oxononanoate (AON), [acyl-carrier protein], and carbon dioxide. The protein is 8-amino-7-oxononanoate synthase of Yersinia pestis bv. Antiqua (strain Angola).